Consider the following 262-residue polypeptide: ATP synthase subunit a (262 aa).

The next 7 membrane-spanning stretches (helical) occupy residues 30–50 (ITSL…LTIF), 64–84 (WNIV…DQIG), 91–111 (LIYF…NILG), 123–143 (ISVT…IGFS), 149–169 (FFSL…LVLI), 195–215 (LFGV…SILL), and 220–240 (IGLP…VALL).

It belongs to the ATPase A chain family. F-type ATPases have 2 components, CF(1) - the catalytic core - and CF(0) - the membrane proton channel. CF(1) has five subunits: alpha(3), beta(3), gamma(1), delta(1), epsilon(1). CF(0) has three main subunits: a, b and c.

The protein resides in the mitochondrion inner membrane. Mitochondrial membrane ATP synthase (F(1)F(0) ATP synthase or Complex V) produces ATP from ADP in the presence of a proton gradient across the membrane which is generated by electron transport complexes of the respiratory chain. F-type ATPases consist of two structural domains, F(1) - containing the extramembraneous catalytic core and F(0) - containing the membrane proton channel, linked together by a central stalk and a peripheral stalk. During catalysis, ATP synthesis in the catalytic domain of F(1) is coupled via a rotary mechanism of the central stalk subunits to proton translocation. Key component of the proton channel; it may play a direct role in the translocation of protons across the membrane. This Allomyces arbusculus (Aquatic fungus) protein is ATP synthase subunit a (ATP6).